Here is a 505-residue protein sequence, read N- to C-terminus: Protein disulfide-isomerase A3 (505 aa).

The N-terminal stretch at 1-24 (MRLRRLALFPGVALLLAAARLAAA) is a signal peptide. The 109-residue stretch at 25 to 133 (SDVLELTDDN…IVSHLKKQAG (109 aa)) folds into the Thioredoxin 1 domain. Active-site nucleophile residues include Cys-57 and Cys-60. Cys-57 and Cys-60 form a disulfide bridge. An N6-methyllysine modification is found at Lys-61. A disulfide bond links Cys-85 and Cys-92. The residue at position 129 (Lys-129) is an N6-succinyllysine. Position 152 is an N6-acetyllysine (Lys-152). Lys-218 is modified (N6-succinyllysine). The residue at position 252 (Lys-252) is an N6-acetyllysine. The residue at position 319 (Thr-319) is a Phosphothreonine. The Thioredoxin 2 domain maps to 343–485 (SRDGKALERF…FISYLQREAT (143 aa)). Position 362 is an N6-acetyllysine (Lys-362). Active-site nucleophile residues include Cys-406 and Cys-409. Residues Cys-406 and Cys-409 are joined by a disulfide bond. The disordered stretch occupies residues 484-505 (ATNPPVIQEEKPKKKKKAQEDL). Residues 491–505 (QEEKPKKKKKAQEDL) are compositionally biased toward basic and acidic residues. At Lys-494 the chain carries N6-acetyllysine. Positions 502 to 505 (QEDL) match the Prevents secretion from ER motif.

It belongs to the protein disulfide isomerase family. In terms of assembly, part of the major histocompatibility complex class I (MHC I) peptide loading complex composed of TAP1, TAP2, B2M, MHC heavy chain, TAPBP, PDIA3, and CALR. Interacts with ERP27 and CANX. Interacts with SERPINA2 and with SERPINA1. Interacts with ATP2A2. Within the major histocompatibility complex class I (MHC I) peptide loading complex forms reversible disulfide-linked heterodimers with TAPBP as part of its protein folding chaperone activity. This is essential to assist the dynamic assembly of the MHC I complex with high affinity antigens in the endoplasmic reticulum. Post-translationally, phosphorylated.

The protein localises to the endoplasmic reticulum. It is found in the endoplasmic reticulum lumen. The protein resides in the melanosome. It catalyses the reaction Catalyzes the rearrangement of -S-S- bonds in proteins.. Functionally, protein disulfide isomerase that catalyzes the formation, isomerization, and reduction or oxidation of disulfide bonds in client proteins and functions as a protein folding chaperone. Core component of the major histocompatibility complex class I (MHC I) peptide loading complex where it functions as an essential folding chaperone for TAPBP. Through TAPBP, assists the dynamic assembly of the MHC I complex with high affinity antigens in the endoplasmic reticulum. Therefore, plays a crucial role in the presentation of antigens to cytotoxic T cells in adaptive immunity. In Chlorocebus aethiops (Green monkey), this protein is Protein disulfide-isomerase A3 (PDIA3).